Here is a 150-residue protein sequence, read N- to C-terminus: 6,7-dimethyl-8-ribityllumazine synthase (150 aa).

Residues Phe11, 43–45, and 67–69 each bind 5-amino-6-(D-ribitylamino)uracil; these read TYE and AVI. Residue 72 to 73 participates in (2S)-2-hydroxy-3-oxobutyl phosphate binding; the sequence is AT. Catalysis depends on His75, which acts as the Proton donor. 5-amino-6-(D-ribitylamino)uracil is bound at residue Leu100. Position 115 (Arg115) interacts with (2S)-2-hydroxy-3-oxobutyl phosphate.

It belongs to the DMRL synthase family.

It carries out the reaction (2S)-2-hydroxy-3-oxobutyl phosphate + 5-amino-6-(D-ribitylamino)uracil = 6,7-dimethyl-8-(1-D-ribityl)lumazine + phosphate + 2 H2O + H(+). Its pathway is cofactor biosynthesis; riboflavin biosynthesis; riboflavin from 2-hydroxy-3-oxobutyl phosphate and 5-amino-6-(D-ribitylamino)uracil: step 1/2. Catalyzes the formation of 6,7-dimethyl-8-ribityllumazine by condensation of 5-amino-6-(D-ribitylamino)uracil with 3,4-dihydroxy-2-butanone 4-phosphate. This is the penultimate step in the biosynthesis of riboflavin. This Staphylothermus marinus (strain ATCC 43588 / DSM 3639 / JCM 9404 / F1) protein is 6,7-dimethyl-8-ribityllumazine synthase.